Here is a 753-residue protein sequence, read N- to C-terminus: Ribosome biogenesis protein BOP1 homolog (753 aa).

Residues 1 to 155 form a disordered region; the sequence is MTKRSKGANE…RNTVGNVPLK (155 aa). Composition is skewed to basic and acidic residues over residues 7 to 18 and 30 to 41; these read GANEDKLIETKS and KPVEAESLKEED. Acidic residues-rich tracts occupy residues 64–75 and 83–109; these read DDFDSDFSDSED and EDGD…DDDG. Basic and acidic residues predominate over residues 110–121; sequence SEHVGSDNNEEH. Over residues 122–142 the composition is skewed to acidic residues; the sequence is GSDEDSERGEAVEESDSSEDE. WD repeat units lie at residues 421 to 462, 464 to 502, 539 to 581, 626 to 665, 669 to 708, and 722 to 753; these read GHTG…KVWQ, DEAI…DEEQ, RHFK…TQRL, TGLR…KPYK, NHPK…DLNQ, and SSKG…LYCH.

The protein belongs to the WD repeat BOP1/ERB1 family. Interacts with PES. Interacts with WDR12.

It is found in the nucleus. Its subcellular location is the nucleolus. The protein resides in the nucleoplasm. Required for maturation of ribosomal RNAs and formation of the large ribosomal subunit. Plays an essential role in cell growth and survival through its regulation of ribosome biogenesis and mitotic progression. In Arabidopsis thaliana (Mouse-ear cress), this protein is Ribosome biogenesis protein BOP1 homolog.